The following is a 641-amino-acid chain: Tetracycline resistance protein TetQ (641 aa).

The tr-type G domain occupies 1–244 (MNIINLGILA…AITSFILPPA (244 aa)). GTP contacts are provided by residues 10–17 (AHIDAGKT), 74–78 (DTPGH), and 128–131 (NKID).

It belongs to the TRAFAC class translation factor GTPase superfamily. Classic translation factor GTPase family. TetM/TetO subfamily.

Abolishes the inhibitory effect of tetracyclin on protein synthesis by a non-covalent modification of the ribosomes. The protein is Tetracycline resistance protein TetQ (tetQ) of Xylanibacter ruminicola (Prevotella ruminicola).